A 153-amino-acid chain; its full sequence is UPF0158 protein PA5073 (153 aa).

It belongs to the UPF0158 family.

The sequence is that of UPF0158 protein PA5073 from Pseudomonas aeruginosa (strain ATCC 15692 / DSM 22644 / CIP 104116 / JCM 14847 / LMG 12228 / 1C / PRS 101 / PAO1).